A 188-amino-acid polypeptide reads, in one-letter code: Putative adenylate kinase (188 aa).

Glycine 10, glycine 12, lysine 13, serine 14, and threonine 15 together coordinate ATP. Positions 30–53 (HVSSFLIQNKAFSEYDELRQSYVI) are NMP. Residues 103-113 (RRGWGELKIAE) are LID. Residues arginine 104 and lysine 142 each coordinate ATP.

This sequence belongs to the adenylate kinase family. AK6 subfamily. As to quaternary structure, interacts with uS11. Not a structural component of 40S pre-ribosomes, but transiently interacts with them by binding to uS11.

The catalysed reaction is AMP + ATP = 2 ADP. The enzyme catalyses ATP + H2O = ADP + phosphate + H(+). Broad-specificity nucleoside monophosphate (NMP) kinase that catalyzes the reversible transfer of the terminal phosphate group between nucleoside triphosphates and monophosphates. Also has ATPase activity. Involved in the late maturation steps of the 30S ribosomal particles, specifically 16S rRNA maturation. While NMP activity is not required for ribosome maturation, ATPase activity is. Associates transiently with small ribosomal subunit protein uS11. ATP hydrolysis breaks the interaction with uS11. May temporarily remove uS11 from the ribosome to enable a conformational change of the ribosomal RNA that is needed for the final maturation step of the small ribosomal subunit. The protein is Putative adenylate kinase of Sulfurisphaera tokodaii (strain DSM 16993 / JCM 10545 / NBRC 100140 / 7) (Sulfolobus tokodaii).